Here is a 651-residue protein sequence, read N- to C-terminus: Methionine--tRNA ligase (651 aa).

Positions 10-20 (AYTNGPLHLGH) match the 'HIGH' region motif. Residues Cys-142, Cys-145, Cys-154, and Cys-157 each coordinate Zn(2+). The 'KMSKS' region motif lies at 320 to 324 (KMSTS). Thr-323 is an ATP binding site. The region spanning 550 to 651 (YLEKIDLRVG…KDIKAGSKVR (102 aa)) is the tRNA-binding domain.

The protein belongs to the class-I aminoacyl-tRNA synthetase family. MetG type 1 subfamily. As to quaternary structure, homodimer. Zn(2+) is required as a cofactor.

The protein localises to the cytoplasm. It catalyses the reaction tRNA(Met) + L-methionine + ATP = L-methionyl-tRNA(Met) + AMP + diphosphate. Is required not only for elongation of protein synthesis but also for the initiation of all mRNA translation through initiator tRNA(fMet) aminoacylation. This is Methionine--tRNA ligase from Methanocaldococcus jannaschii (strain ATCC 43067 / DSM 2661 / JAL-1 / JCM 10045 / NBRC 100440) (Methanococcus jannaschii).